The chain runs to 119 residues: UPF0102 protein HI_1656 (119 aa).

Belongs to the UPF0102 family.

The protein is UPF0102 protein HI_1656 of Haemophilus influenzae (strain ATCC 51907 / DSM 11121 / KW20 / Rd).